A 146-amino-acid polypeptide reads, in one-letter code: Transcriptional regulator MraZ (146 aa).

SpoVT-AbrB domains are found at residues 9 to 55 (TSAL…PRPV) and 81 to 124 (AMDV…DAQR).

The protein belongs to the MraZ family. In terms of assembly, forms oligomers.

The protein localises to the cytoplasm. The protein resides in the nucleoid. The polypeptide is Transcriptional regulator MraZ (Leptothrix cholodnii (strain ATCC 51168 / LMG 8142 / SP-6) (Leptothrix discophora (strain SP-6))).